Consider the following 340-residue polypeptide: Methane monooxygenase component C (340 aa).

A 2Fe-2S ferredoxin-type domain is found at 1–92 (MYQIVIETED…DLHLLVPYTY (92 aa)). [2Fe-2S] cluster is bound by residues C37, C41, C44, and C76. Residues 101 to 205 (QTNWLAEILA…RGPAGSFFLH (105 aa)) enclose the FAD-binding FR-type domain. 215–229 (VAGGTGLSPVLSMIR) provides a ligand contact to FAD.

In terms of assembly, the soluble methane monooxygenase (sMMO) consists of four components A/MMOH (composed of alpha/MmoX, beta/MmoY and gamma/MmoZ), B/MMOB (MmoB), C/MMOR (MmoC) and D/MMOD (MmoD). [2Fe-2S] cluster serves as cofactor.

It catalyses the reaction methane + NADH + O2 + H(+) = methanol + NAD(+) + H2O. It carries out the reaction methane + NADPH + O2 + H(+) = methanol + NADP(+) + H2O. Functionally, responsible for the initial oxygenation of methane to methanol in methanotrophs. It also catalyzes the monohydroxylation of a variety of unactivated alkenes, alicyclic, aromatic and heterocyclic compounds. The component C is the iron-sulfur flavoprotein of sMMO. This Methylosinus trichosporium protein is Methane monooxygenase component C (mmoC).